A 279-amino-acid chain; its full sequence is Tryptophan synthase alpha chain (279 aa).

Residues glutamate 50 and aspartate 61 each act as proton acceptor in the active site.

This sequence belongs to the TrpA family. In terms of assembly, tetramer of two alpha and two beta chains.

It catalyses the reaction (1S,2R)-1-C-(indol-3-yl)glycerol 3-phosphate + L-serine = D-glyceraldehyde 3-phosphate + L-tryptophan + H2O. The protein operates within amino-acid biosynthesis; L-tryptophan biosynthesis; L-tryptophan from chorismate: step 5/5. In terms of biological role, the alpha subunit is responsible for the aldol cleavage of indoleglycerol phosphate to indole and glyceraldehyde 3-phosphate. The chain is Tryptophan synthase alpha chain from Rhizobium johnstonii (strain DSM 114642 / LMG 32736 / 3841) (Rhizobium leguminosarum bv. viciae).